Reading from the N-terminus, the 347-residue chain is Protein NDL3 (347 aa).

This sequence belongs to the NDRG family. Interacts with the heterodimers formed by GB1 and GG1, or GB1 and GG2. Interacts with RGS1.

Its subcellular location is the cytoplasm. Functionally, involved in a signaling pathway that modulates root auxin transport and auxin gradients. Acts partially by positively regulating the auxin carrier PIN2 and AUX1. Acts, together with GB1 as positive regulator of meristem initiation and branching. GB1 and NDL3 positively regulate basipetal inflorescence auxin transport and modulate MAX2 expression in shoots, which regulates organ and lateral meristem formation by the establishment and maintenance of auxin gradients. The sequence is that of Protein NDL3 from Arabidopsis thaliana (Mouse-ear cress).